Consider the following 620-residue polypeptide: Glutathione-regulated potassium-efflux system protein KefC (620 aa).

12 helical membrane passes run 4-24, 26-46, 54-74, 90-110, 114-134, 149-169, 178-198, 218-238, 270-290, 294-314, 327-347, and 359-379; these read HTLV…PIAV, LGLG…PWGL, SILH…GLEL, GALQ…LLGL, VAEL…MQAM, FAVL…IPLL, MGAF…VVLL, VFSA…EEVG, GLLL…GTLL, LRIV…LWLI, WFAV…GAAQ, and SLTL…VILN. The 120-residue stretch at 399–518 folds into the RCK N-terminal domain; that stretch reads QPRVIIAGFG…AGVEKPERET (120 aa). The tract at residues 597–620 is disordered; the sequence is GWQGTEEGKHTGNMADEPETKPSS.

The protein belongs to the monovalent cation:proton antiporter 2 (CPA2) transporter (TC 2.A.37) family. KefC subfamily. As to quaternary structure, homodimer. Interacts with the regulatory subunit KefF.

It localises to the cell inner membrane. Its function is as follows. Pore-forming subunit of a potassium efflux system that confers protection against electrophiles. Catalyzes K(+)/H(+) antiport. This chain is Glutathione-regulated potassium-efflux system protein KefC, found in Escherichia coli O139:H28 (strain E24377A / ETEC).